The following is a 213-amino-acid chain: Kynurenine formamidase (213 aa).

Trp-18 serves as a coordination point for substrate. Zn(2+)-binding residues include His-48, His-52, and Asp-54. His-58 acts as the Proton donor/acceptor in catalysis. Zn(2+)-binding residues include His-160 and Glu-172.

The protein belongs to the Cyclase 1 superfamily. KynB family. Homodimer. Requires Zn(2+) as cofactor.

It catalyses the reaction N-formyl-L-kynurenine + H2O = L-kynurenine + formate + H(+). It functions in the pathway amino-acid degradation; L-tryptophan degradation via kynurenine pathway; L-kynurenine from L-tryptophan: step 2/2. Catalyzes the hydrolysis of N-formyl-L-kynurenine to L-kynurenine, the second step in the kynurenine pathway of tryptophan degradation. This Burkholderia mallei (strain NCTC 10247) protein is Kynurenine formamidase.